An 813-amino-acid polypeptide reads, in one-letter code: ATP-dependent zinc metalloprotease FTSH 10, mitochondrial (813 aa).

Residues 1–86 constitute a mitochondrion transit peptide; that stretch reads MIFSKLGSSL…FANPRLRRFF (86 aa). Residues 93-129 are disordered; the sequence is KKNYENYYPKDSKKAPKNEQKSESRDGSKKNENENAG. The segment covering 94–125 has biased composition (basic and acidic residues); the sequence is KNYENYYPKDSKKAPKNEQKSESRDGSKKNEN. A helical transmembrane segment spans residues 139-157; sequence MLIPLMAIALILSTFSLGS. 367-374 provides a ligand contact to ATP; it reads GPPGTGKT. Histidine 592 is a Zn(2+) binding site. Glutamate 593 is a catalytic residue. Histidine 596 and aspartate 668 together coordinate Zn(2+). The segment covering 764–790 has biased composition (basic and acidic residues); it reads RPFKSGETTNYDRFKSGFEESEKESQK. The tract at residues 764-813 is disordered; the sequence is RPFKSGETTNYDRFKSGFEESEKESQKESVPVKPVEDDGIPPLEPQVVPT.

This sequence in the N-terminal section; belongs to the AAA ATPase family. The protein in the C-terminal section; belongs to the peptidase M41 family. The cofactor is Zn(2+).

The protein resides in the mitochondrion inner membrane. Probable ATP-dependent zinc metallopeptidase. Involved in the assembly and/or stability of the complexes I and V of the mitochondrial oxidative phosphorylation system. The chain is ATP-dependent zinc metalloprotease FTSH 10, mitochondrial (FTSH10) from Arabidopsis thaliana (Mouse-ear cress).